The primary structure comprises 191 residues: Protein GrpE (191 aa).

Residues 1–10 (MNHEEQKVET) are compositionally biased toward basic and acidic residues. Residues 1–28 (MNHEEQKVETMEQVEAQPVEPTDVDSEV) form a disordered region.

It belongs to the GrpE family. As to quaternary structure, homodimer.

It is found in the cytoplasm. Functionally, participates actively in the response to hyperosmotic and heat shock by preventing the aggregation of stress-denatured proteins, in association with DnaK and GrpE. It is the nucleotide exchange factor for DnaK and may function as a thermosensor. Unfolded proteins bind initially to DnaJ; upon interaction with the DnaJ-bound protein, DnaK hydrolyzes its bound ATP, resulting in the formation of a stable complex. GrpE releases ADP from DnaK; ATP binding to DnaK triggers the release of the substrate protein, thus completing the reaction cycle. Several rounds of ATP-dependent interactions between DnaJ, DnaK and GrpE are required for fully efficient folding. This chain is Protein GrpE, found in Aeromonas salmonicida (strain A449).